Here is an 874-residue protein sequence, read N- to C-terminus: Alanine--tRNA ligase (874 aa).

Zn(2+) contacts are provided by histidine 564, histidine 568, cysteine 665, and histidine 669.

It belongs to the class-II aminoacyl-tRNA synthetase family. The cofactor is Zn(2+).

The protein resides in the cytoplasm. It catalyses the reaction tRNA(Ala) + L-alanine + ATP = L-alanyl-tRNA(Ala) + AMP + diphosphate. Catalyzes the attachment of alanine to tRNA(Ala) in a two-step reaction: alanine is first activated by ATP to form Ala-AMP and then transferred to the acceptor end of tRNA(Ala). Also edits incorrectly charged Ser-tRNA(Ala) and Gly-tRNA(Ala) via its editing domain. In Paraburkholderia xenovorans (strain LB400), this protein is Alanine--tRNA ligase.